The chain runs to 369 residues: Nudix hydrolase 8 (369 aa).

The Nudix hydrolase domain occupies 188–318 (SHQVGVGGFV…GDKMFKRVIE (131 aa)). The Nudix box motif lies at 225–246 (GFINESEEIFSGAVREVKEETG). Residues E240 and E244 each coordinate Mg(2+).

Belongs to the Nudix hydrolase family. Mg(2+) is required as a cofactor. It depends on Mn(2+) as a cofactor. In terms of tissue distribution, expressed in roots, stems and, at lower level, leaves.

Functionally, probably mediates the hydrolysis of some nucleoside diphosphate derivatives. May be involved in plant immunity and act as a positive regulator of defense response through salicylic acid (SA) signaling. The polypeptide is Nudix hydrolase 8 (NUDT8) (Arabidopsis thaliana (Mouse-ear cress)).